Here is a 631-residue protein sequence, read N- to C-terminus: Phosphomethylpyrimidine synthase (631 aa).

Substrate-binding positions include N239, M268, Y297, H333, 353–355 (SRG), 394–397 (DGLR), and E433. H437 serves as a coordination point for Zn(2+). Y460 serves as a coordination point for substrate. H501 serves as a coordination point for Zn(2+). Positions 581, 584, and 589 each coordinate [4Fe-4S] cluster.

Belongs to the ThiC family. In terms of assembly, homodimer. Requires [4Fe-4S] cluster as cofactor.

The enzyme catalyses 5-amino-1-(5-phospho-beta-D-ribosyl)imidazole + S-adenosyl-L-methionine = 4-amino-2-methyl-5-(phosphooxymethyl)pyrimidine + CO + 5'-deoxyadenosine + formate + L-methionine + 3 H(+). It participates in cofactor biosynthesis; thiamine diphosphate biosynthesis. In terms of biological role, catalyzes the synthesis of the hydroxymethylpyrimidine phosphate (HMP-P) moiety of thiamine from aminoimidazole ribotide (AIR) in a radical S-adenosyl-L-methionine (SAM)-dependent reaction. The protein is Phosphomethylpyrimidine synthase of Escherichia coli O7:K1 (strain IAI39 / ExPEC).